The chain runs to 347 residues: Phosphoribosylformylglycinamidine cyclo-ligase (347 aa).

The protein belongs to the AIR synthase family.

The protein resides in the cytoplasm. It catalyses the reaction 2-formamido-N(1)-(5-O-phospho-beta-D-ribosyl)acetamidine + ATP = 5-amino-1-(5-phospho-beta-D-ribosyl)imidazole + ADP + phosphate + H(+). Its pathway is purine metabolism; IMP biosynthesis via de novo pathway; 5-amino-1-(5-phospho-D-ribosyl)imidazole from N(2)-formyl-N(1)-(5-phospho-D-ribosyl)glycinamide: step 2/2. This Prochlorococcus marinus (strain MIT 9312) protein is Phosphoribosylformylglycinamidine cyclo-ligase.